The following is a 161-amino-acid chain: UPF0178 protein BSUIS_A1819 (161 aa).

Belongs to the UPF0178 family.

This Brucella suis (strain ATCC 23445 / NCTC 10510) protein is UPF0178 protein BSUIS_A1819.